Reading from the N-terminus, the 72-residue chain is Mitochondrial import protein 2 (72 aa).

Residues 1–22 are disordered; it reads MAEVLDLEIDPISDGEDDTYSS. The Cytoplasmic portion of the chain corresponds to 1–34; the sequence is MAEVLDLEIDPISDGEDDTYSSELDDDLKDSIEQ. Residues 35 to 52 form a helical membrane-spanning segment; that stretch reads LERVLCLVVFPLLGKFLG. Topologically, residues 53–72 are mitochondrial intermembrane; sequence RKFAFHAWARWLERRRLVSN.

Belongs to the MIM2 family. Component of the mitochondrial outer import machinery (MIM) complex containing at least mim1 and mim2. Interacts with mim1. Interacts with mitophagy receptor atg43.

The protein resides in the mitochondrion outer membrane. Functionally, component of the mitochondrial outer import machinery (MIM) complex that mediates transport of proteins into mitochondrial compartments. Promotes the insertion of tom70 into the outer mitochondrial membrane. Promotes the insertion of atg43 into the outer mitochondrial membrane. Involved in import of the subset of proteins with multiple alpha-helical transmembrane segments. The protein is Mitochondrial import protein 2 of Schizosaccharomyces pombe (strain 972 / ATCC 24843) (Fission yeast).